The primary structure comprises 202 residues: Superoxide dismutase [Mn] (202 aa).

His27 lines the Mn(2+) pocket. Residues Thr34 and Thr70 each carry the phosphothreonine modification. Mn(2+)-binding residues include His82, Asp164, and His168.

Belongs to the iron/manganese superoxide dismutase family. Homodimer; under aerobic conditions. Under anaerobic conditions it is a component of the so-called 'green protein' complex (GPC), which consists of at least two components, SodA and a nucleoside diphosphate kinase (NDK). It depends on Mn(2+) as a cofactor.

The protein resides in the cytoplasm. The catalysed reaction is 2 superoxide + 2 H(+) = H2O2 + O2. Destroys superoxide anion radicals which are normally produced within the cells and which are toxic to biological systems. Active only in homodimeric state. The protein is Superoxide dismutase [Mn] (sodA) of Virgibacillus halodenitrificans (Bacillus halodenitrificans).